The chain runs to 349 residues: Lipoyl synthase (349 aa).

Cysteine 55, cysteine 60, cysteine 66, cysteine 81, cysteine 85, cysteine 88, and serine 292 together coordinate [4Fe-4S] cluster. The Radical SAM core domain occupies 67–281 (WESREATFLI…ADFARELGFG (215 aa)).

This sequence belongs to the radical SAM superfamily. Lipoyl synthase family. [4Fe-4S] cluster is required as a cofactor.

It localises to the cytoplasm. It catalyses the reaction [[Fe-S] cluster scaffold protein carrying a second [4Fe-4S](2+) cluster] + N(6)-octanoyl-L-lysyl-[protein] + 2 oxidized [2Fe-2S]-[ferredoxin] + 2 S-adenosyl-L-methionine + 4 H(+) = [[Fe-S] cluster scaffold protein] + N(6)-[(R)-dihydrolipoyl]-L-lysyl-[protein] + 4 Fe(3+) + 2 hydrogen sulfide + 2 5'-deoxyadenosine + 2 L-methionine + 2 reduced [2Fe-2S]-[ferredoxin]. It functions in the pathway protein modification; protein lipoylation via endogenous pathway; protein N(6)-(lipoyl)lysine from octanoyl-[acyl-carrier-protein]: step 2/2. Catalyzes the radical-mediated insertion of two sulfur atoms into the C-6 and C-8 positions of the octanoyl moiety bound to the lipoyl domains of lipoate-dependent enzymes, thereby converting the octanoylated domains into lipoylated derivatives. The protein is Lipoyl synthase of Corynebacterium diphtheriae (strain ATCC 700971 / NCTC 13129 / Biotype gravis).